The following is a 182-amino-acid chain: Adenine phosphoribosyltransferase (182 aa).

The protein belongs to the purine/pyrimidine phosphoribosyltransferase family. Homodimer.

It is found in the cytoplasm. The enzyme catalyses AMP + diphosphate = 5-phospho-alpha-D-ribose 1-diphosphate + adenine. Its pathway is purine metabolism; AMP biosynthesis via salvage pathway; AMP from adenine: step 1/1. Functionally, catalyzes a salvage reaction resulting in the formation of AMP, that is energically less costly than de novo synthesis. In Streptomyces coelicolor (strain ATCC BAA-471 / A3(2) / M145), this protein is Adenine phosphoribosyltransferase.